Consider the following 399-residue polypeptide: Bone morphogenetic protein 8B (399 aa).

Residues M1–G19 form the signal peptide. The propeptide occupies G20–R260. Residues N155 and N340 are each glycosylated (N-linked (GlcNAc...) asparagine). 3 cysteine pairs are disulfide-bonded: C298/C364, C327/C396, and C331/C398.

The protein belongs to the TGF-beta family. Homodimer; disulfide-linked. In terms of tissue distribution, expressed in testis. Expressed in decidual cells of the uterus and in trophoblast cells of the labyrinthine region of the placenta and in the inner root sheath of hair follicles of early postnatal skin. Expressed in the extraembryonic ectoderm in pregastrula and gastrula stage mouse embryos. Expressed in brown adipose tissue and brain.

The protein localises to the secreted. In terms of biological role, induces cartilage and bone formation. May be the osteoinductive factor responsible for the phenomenon of epithelial osteogenesis. Plays a role in calcium regulation and bone homeostasis. Involved in the generation of primordial germ cells; this function involves Bmp4 in a synergistic manner though separate receptor complexes seem to be involved. Required for the initiation and maintenance of spermatogenesis. Signaling protein involved in regulation of thermogenesis and energy balance. Proposed to increase the peripheral response of brown adipose tissue (BAT) to adrenergic stimulation while acting centrally in the hypothalamus to increase sympathetic output to BAT. This chain is Bone morphogenetic protein 8B (Bmp8b), found in Mus musculus (Mouse).